Here is a 172-residue protein sequence, read N- to C-terminus: uncharacterized protein (172 aa).

One can recognise a PfpI endopeptidase domain in the interval 3–171 (KKVAIILTNE…FNREIVNQLN (169 aa)).

The protein belongs to the peptidase C56 family.

This is an uncharacterized protein from Staphylococcus saprophyticus subsp. saprophyticus (strain ATCC 15305 / DSM 20229 / NCIMB 8711 / NCTC 7292 / S-41).